Reading from the N-terminus, the 290-residue chain is MTKNQALRAALDSGRLFTAMAAHNPLVAKLAEQAGFGGIWGSGFELSASYAVPDANILSMSTHLEMMRAIASTVSIPLIADIDTGFGNAVNVHYVVPQYEAAGASAIVMEDKTFPKDTSLRTDGRQELVRIEEFQGKIAAATAARADRDFVVIARVEALIAGLGQQEAVRRGQAYEEAGADAILIHSRQKTPDEILAFVKSWPGKVPLVLVPTAYPQLTEADIAALSKVGIVIYGNHAIRAAVGAVREVFARIRRDGGIREVDAALPSVKEIIELQGDERMRAVEARYLK.

40–44 (WGSGF) contacts substrate. The Nucleophile role is filled by D54. D81 lines the Mg(2+) pocket. 3 residues coordinate substrate: R155, H186, and R188.

In terms of assembly, homodimer. Homotetramer. It depends on Co(2+) as a cofactor. The cofactor is Mg(2+). Mn(2+) is required as a cofactor.

The catalysed reaction is 3-phosphonopyruvate + H2O = pyruvate + phosphate + H(+). Its activity is regulated as follows. Partially inhibited by EDTA. Activity is restored by Co(2+), and to a lesser extent by Ni(2+) and Mg(2+). Unaffected by Cs(2+) and Ca(2+). Activity is reduced by Mn(2+) and Cu(2+). In terms of biological role, hydrolyzes phosphonopyruvate. Not active towards phosphoenolpyruvate, glycerophosphate, phospho-L-serine or phosphoglycolic acid. The protein is Phosphonopyruvate hydrolase of Variovorax sp. (strain Pal2).